Here is an 81-residue protein sequence, read N- to C-terminus: Acyl carrier protein (81 aa).

The Carrier domain maps to alanine 2–alanine 77. Residue serine 37 is modified to O-(pantetheine 4'-phosphoryl)serine.

Belongs to the acyl carrier protein (ACP) family. 4'-phosphopantetheine is transferred from CoA to a specific serine of apo-ACP by AcpS. This modification is essential for activity because fatty acids are bound in thioester linkage to the sulfhydryl of the prosthetic group.

It is found in the cytoplasm. The protein operates within lipid metabolism; fatty acid biosynthesis. Carrier of the growing fatty acid chain in fatty acid biosynthesis. The chain is Acyl carrier protein from Koribacter versatilis (strain Ellin345).